Consider the following 569-residue polypeptide: Adenine deaminase (569 aa).

This sequence belongs to the metallo-dependent hydrolases superfamily. Adenine deaminase family. Mn(2+) serves as cofactor.

The catalysed reaction is adenine + H2O + H(+) = hypoxanthine + NH4(+). In Desulfitobacterium hafniense (strain Y51), this protein is Adenine deaminase.